Here is a 413-residue protein sequence, read N- to C-terminus: Exodeoxyribonuclease I (413 aa).

Residues 12-193 enclose the Exonuclease domain; it reads LFYDYETFGI…VSDVYATIEI (182 aa). Mg(2+) contacts are provided by Asp-15, Glu-17, and Asp-186. Position 17 (Glu-17) interacts with substrate. Positions 202 to 349 constitute an ExoI SH3-like domain; sequence PRLFDFFFKI…QNIKIIFSKN (148 aa). The region spanning 350 to 413 is the ExoI C-terminal domain; it reads NNTNQFFNVD…RYRARNFFIH (64 aa).

Monomer. Interacts with ssb (via C-terminus); this interaction stimulates the exonuclease activity by recruiting the enzyme to its substrate. The cofactor is Mg(2+).

The catalysed reaction is Exonucleolytic cleavage in the 3'- to 5'-direction to yield nucleoside 5'-phosphates.. Degrades single-stranded DNA (ssDNA) in a highly processive manner. Also functions as a DNA deoxyribophosphodiesterase that releases deoxyribose-phosphate moieties following the cleavage of DNA at an apurinic/apyrimidinic (AP) site by either an AP endonuclease or AP lyase. The polypeptide is Exodeoxyribonuclease I (sbcB) (Buchnera aphidicola subsp. Acyrthosiphon pisum (strain APS) (Acyrthosiphon pisum symbiotic bacterium)).